A 537-amino-acid polypeptide reads, in one-letter code: 4-coumarate--CoA ligase (537 aa).

6 residues coordinate ATP: Ser-189, Ser-190, Gly-191, Thr-192, Thr-193, and Lys-197. Residues Tyr-239 and Ser-243 each coordinate (E)-4-coumaroyl-AMP. Residue Lys-260 coordinates CoA. The SBD1 stretch occupies residues 262-331 (NLTTCLELIQ…ERFPKAIFGQ (70 aa)). Positions 309, 331, 332, 336, and 344 each coordinate (E)-4-coumaroyl-AMP. Positions 331, 332, and 336 each coordinate ATP. The segment at 332 to 399 (GYGMTEAGPV…IRGPEIMKGY (68 aa)) is SBD2. ATP contacts are provided by Asp-420 and Arg-435. 2 residues coordinate (E)-4-coumaroyl-AMP: Lys-437 and Lys-441. Lys-443 and Gly-444 together coordinate CoA. Lys-524 lines the ATP pocket.

It belongs to the ATP-dependent AMP-binding enzyme family. The cofactor is Mg(2+).

The catalysed reaction is (E)-4-coumarate + ATP + CoA = (E)-4-coumaroyl-CoA + AMP + diphosphate. It carries out the reaction (E)-4-coumarate + ATP + H(+) = (E)-4-coumaroyl-AMP + diphosphate. The enzyme catalyses (E)-4-coumaroyl-AMP + CoA = (E)-4-coumaroyl-CoA + AMP + H(+). Its pathway is phytoalexin biosynthesis; 3,4',5-trihydroxystilbene biosynthesis; 3,4',5-trihydroxystilbene from trans-4-coumarate: step 1/2. Its function is as follows. Carboxylate--CoA ligase that may use 4-coumarate as substrate. Follows a two-step reaction mechanism, wherein the carboxylate substrate first undergoes adenylation by ATP, followed by a thioesterification in the presence of CoA to yield the final CoA thioester. In Pinus taeda (Loblolly pine), this protein is 4-coumarate--CoA ligase (4CL).